Here is a 230-residue protein sequence, read N- to C-terminus: MTNEVQSIFNRIAPVYDQLNDWLSLGQHRIWKEMAVKWSAAKSGNTALDLCCGSGDLALRLARRVGATGYVYGVDFSCNLLETAKERSQKQYPQPAIAWVEADVLNLPFDDNQFDAATMGYGLRNVKDIPRSLQELHRVLKPGAKAAILDFHRPSNPQLRAFQQLYLNSFVVPVANYLGLKEEYAYISPSLDRFPIGKEQIELARQVGFAVATHYPIANGMMGVLVVSKF.

The protein belongs to the class I-like SAM-binding methyltransferase superfamily. MenG/UbiE family.

The enzyme catalyses demethylphylloquinol + S-adenosyl-L-methionine = phylloquinol + S-adenosyl-L-homocysteine + H(+). The protein operates within cofactor biosynthesis; phylloquinone biosynthesis. Methyltransferase required for the conversion of 2-phytyl-1,4-beta-naphthoquinol to phylloquinol. This is 2-phytyl-1,4-naphtoquinone methyltransferase from Nostoc punctiforme (strain ATCC 29133 / PCC 73102).